The primary structure comprises 179 residues: Large ribosomal subunit protein uL6 (179 aa).

This sequence belongs to the universal ribosomal protein uL6 family. As to quaternary structure, part of the 50S ribosomal subunit.

In terms of biological role, this protein binds to the 23S rRNA, and is important in its secondary structure. It is located near the subunit interface in the base of the L7/L12 stalk, and near the tRNA binding site of the peptidyltransferase center. In Syntrophotalea carbinolica (strain DSM 2380 / NBRC 103641 / GraBd1) (Pelobacter carbinolicus), this protein is Large ribosomal subunit protein uL6.